A 73-amino-acid polypeptide reads, in one-letter code: Large ribosomal subunit protein bL31 (73 aa).

Residues C16, C18, C38, and C41 each coordinate Zn(2+).

It belongs to the bacterial ribosomal protein bL31 family. Type A subfamily. As to quaternary structure, part of the 50S ribosomal subunit. It depends on Zn(2+) as a cofactor.

Binds the 23S rRNA. The chain is Large ribosomal subunit protein bL31 from Vibrio vulnificus (strain YJ016).